Here is a 411-residue protein sequence, read N- to C-terminus: Na(+)/H(+) antiporter NhaA 2 (411 aa).

10 consecutive transmembrane segments (helical) span residues 18–38 (VGGS…NSPV), 59–79 (LTVG…VAGL), 97–117 (LLPI…AATI), 127–147 (GWAI…ALTG), 167–187 (LLAI…LWLL), 218–238 (WYCM…LGLL), 261–281 (PLSA…VALS), 297–317 (VIAG…WLAI), 338–358 (VLGA…LAGI), and 366–386 (IAKV…SALL).

This sequence belongs to the NhaA Na(+)/H(+) (TC 2.A.33) antiporter family.

The protein localises to the cell membrane. It catalyses the reaction Na(+)(in) + 2 H(+)(out) = Na(+)(out) + 2 H(+)(in). Its function is as follows. Na(+)/H(+) antiporter that extrudes sodium in exchange for external protons. The protein is Na(+)/H(+) antiporter NhaA 2 of Rhodococcus jostii (strain RHA1).